The primary structure comprises 123 residues: Periplasmic [Fe] hydrogenase small subunit (123 aa).

A signal peptide (tat-type signal) is located at residues 1–34 (MQIASITRRGFLKVACVTTGAALIGIRMTGKAVA). Residues 103–123 (TTAGKLPNPRASEFEGPYPYE) form a disordered region.

In terms of assembly, heterodimer of a large and a small subunit. Post-translationally, predicted to be exported by the Tat system. The position of the signal peptide cleavage has been experimentally proven.

Its subcellular location is the periplasm. The catalysed reaction is H2 + 2 oxidized [2Fe-2S]-[ferredoxin] = 2 reduced [2Fe-2S]-[ferredoxin] + 2 H(+). Functionally, may be involved in hydrogen uptake for the reduction of sulfate to hydrogen sulfide in an electron transport chain. Cytochrome c3 is likely to be the physiological electron carrier for the enzyme. The polypeptide is Periplasmic [Fe] hydrogenase small subunit (hydB) (Nitratidesulfovibrio vulgaris (strain ATCC 29579 / DSM 644 / CCUG 34227 / NCIMB 8303 / VKM B-1760 / Hildenborough) (Desulfovibrio vulgaris)).